Consider the following 368-residue polypeptide: tRNA-specific 2-thiouridylase MnmA (368 aa).

Residues 14–21 and Leu-40 each bind ATP; that span reads AMSGGVDS. Cys-108 functions as the Nucleophile in the catalytic mechanism. Cys-108 and Cys-204 are oxidised to a cystine. Position 132 (Gly-132) interacts with ATP. The segment at 154–156 is interaction with tRNA; it reads KDQ. The active-site Cysteine persulfide intermediate is the Cys-204.

It belongs to the MnmA/TRMU family.

Its subcellular location is the cytoplasm. It catalyses the reaction S-sulfanyl-L-cysteinyl-[protein] + uridine(34) in tRNA + AH2 + ATP = 2-thiouridine(34) in tRNA + L-cysteinyl-[protein] + A + AMP + diphosphate + H(+). Functionally, catalyzes the 2-thiolation of uridine at the wobble position (U34) of tRNA, leading to the formation of s(2)U34. This is tRNA-specific 2-thiouridylase MnmA from Rickettsia canadensis (strain McKiel).